We begin with the raw amino-acid sequence, 571 residues long: Proline--tRNA ligase (571 aa).

The protein belongs to the class-II aminoacyl-tRNA synthetase family. ProS type 1 subfamily. As to quaternary structure, homodimer.

It localises to the cytoplasm. It catalyses the reaction tRNA(Pro) + L-proline + ATP = L-prolyl-tRNA(Pro) + AMP + diphosphate. Catalyzes the attachment of proline to tRNA(Pro) in a two-step reaction: proline is first activated by ATP to form Pro-AMP and then transferred to the acceptor end of tRNA(Pro). As ProRS can inadvertently accommodate and process non-cognate amino acids such as alanine and cysteine, to avoid such errors it has two additional distinct editing activities against alanine. One activity is designated as 'pretransfer' editing and involves the tRNA(Pro)-independent hydrolysis of activated Ala-AMP. The other activity is designated 'posttransfer' editing and involves deacylation of mischarged Ala-tRNA(Pro). The misacylated Cys-tRNA(Pro) is not edited by ProRS. This Pseudomonas aeruginosa (strain LESB58) protein is Proline--tRNA ligase.